The chain runs to 254 residues: Germin-like protein 4-1 (254 aa).

Positions 1-27 are cleaved as a signal peptide; that stretch reads MASRAFAAVFAAVALVVCSSVLPRALA. A disulfide bridge connects residues Cys-37 and Cys-52. Residues 67-220 form the Cupin type-1 domain; it reads KALGVPGNTV…AFMIDKDQVD (154 aa). Positions 115, 117, 122, and 166 each coordinate Mn(2+).

This sequence belongs to the germin family. Oligomer (believed to be a pentamer but probably hexamer).

It is found in the secreted. The protein localises to the extracellular space. Its subcellular location is the apoplast. In terms of biological role, may play a role in plant defense. Probably has no oxalate oxidase activity even if the active site is conserved. The polypeptide is Germin-like protein 4-1 (Oryza sativa subsp. japonica (Rice)).